Here is a 259-residue protein sequence, read N- to C-terminus: Proteasome subunit alpha (259 aa).

The protein belongs to the peptidase T1A family. In terms of assembly, the 20S proteasome core is composed of 14 alpha and 14 beta subunits that assemble into four stacked heptameric rings, resulting in a barrel-shaped structure. The two inner rings, each composed of seven catalytic beta subunits, are sandwiched by two outer rings, each composed of seven alpha subunits. The catalytic chamber with the active sites is on the inside of the barrel. Has a gated structure, the ends of the cylinder being occluded by the N-termini of the alpha-subunits. Is capped at one or both ends by the proteasome regulatory ATPase, PAN.

Its subcellular location is the cytoplasm. With respect to regulation, the formation of the proteasomal ATPase PAN-20S proteasome complex, via the docking of the C-termini of PAN into the intersubunit pockets in the alpha-rings, triggers opening of the gate for substrate entry. Interconversion between the open-gate and close-gate conformations leads to a dynamic regulation of the 20S proteasome proteolysis activity. Its function is as follows. Component of the proteasome core, a large protease complex with broad specificity involved in protein degradation. The polypeptide is Proteasome subunit alpha (Methanococcus maripaludis (strain C7 / ATCC BAA-1331)).